The sequence spans 323 residues: o-succinylbenzoate synthase (323 aa).

Lys134 acts as the Proton donor in catalysis. Mg(2+) is bound by residues Asp162, Glu191, and Asp214. The active-site Proton acceptor is Lys236.

The protein belongs to the mandelate racemase/muconate lactonizing enzyme family. MenC type 1 subfamily. Requires a divalent metal cation as cofactor.

It catalyses the reaction (1R,6R)-6-hydroxy-2-succinyl-cyclohexa-2,4-diene-1-carboxylate = 2-succinylbenzoate + H2O. Its pathway is quinol/quinone metabolism; 1,4-dihydroxy-2-naphthoate biosynthesis; 1,4-dihydroxy-2-naphthoate from chorismate: step 4/7. It functions in the pathway quinol/quinone metabolism; menaquinone biosynthesis. Converts 2-succinyl-6-hydroxy-2,4-cyclohexadiene-1-carboxylate (SHCHC) to 2-succinylbenzoate (OSB). The sequence is that of o-succinylbenzoate synthase from Edwardsiella ictaluri (strain 93-146).